Reading from the N-terminus, the 476-residue chain is MTKHSGIDPLTQISPNQHVLIRLPSDNLKIVELKANAIVSLGKFGAFRVNEIIGYRFGTTFDIVYDGVEEEFVKGTQTMIGKISVLENRLKASSPALENSSENNRGLINLGSVVQEMSMAEIEAMKREAASGDAIISKMIESHKSFHQKTVHSQEKYLKRKKQKFAKFFTVEYLDSSGLLHYLIEKGDVLRVMDISQESLGMALNLANINSNGQYLCIDETGGLIVYAMLERMFAGDSNSKANGKIVVVHENEHPNLDLLKFSSYSDNFIQRHVKTISVLDFFEPAKEADIKSLFKPLSAEEINDLKSNKKSAYFRRLKWYHNQLSNIEVAASSFDGLLVASTLYLPTLIPRLGEKIHGSRPIVCYSQYKEPLLELSHSLYENLNYLAPSLLETRCRPYQTVRGKLHPLMTMKGGGGYLMWCHRVLPAAEPKLHQETLEKSEIKNSDEEGDEDAHKLDQEKQVIKRRKPNEDNEKL.

Residues 433–476 (LHQETLEKSEIKNSDEEGDEDAHKLDQEKQVIKRRKPNEDNEKL) form a disordered region.

Belongs to the TRM6/GCD10 family. In terms of assembly, heterotetramer; composed of two copies of TRM6 and two copies of TRM61.

The protein localises to the nucleus. Substrate-binding subunit of tRNA (adenine-N(1)-)-methyltransferase, which catalyzes the formation of N(1)-methyladenine at position 58 (m1A58) in initiator methionyl-tRNA. The protein is tRNA (adenine(58)-N(1))-methyltransferase non-catalytic subunit TRM6 (TRM6) of Kluyveromyces lactis (strain ATCC 8585 / CBS 2359 / DSM 70799 / NBRC 1267 / NRRL Y-1140 / WM37) (Yeast).